An 866-amino-acid chain; its full sequence is Transcription factor E2F8 (866 aa).

A phosphoserine mark is found at Ser71 and Ser102. 2 DNA-binding regions span residues 113-182 (RKEK…TWHG) and 261-347 (RKDK…KWTG). 3 disordered regions span residues 409–429 (RKIN…STQN), 532–632 (TITP…STTL), and 794–837 (TNGQ…GSPC). Ser413 and Ser417 each carry phosphoserine. The segment covering 543 to 552 (VCPTTSSNAM) has biased composition (polar residues). 2 stretches are compositionally biased toward basic and acidic residues: residues 588-603 (QGAK…EKGS) and 612-624 (SGSK…DQKA). A compositionally biased stretch (polar residues) spans 794–805 (TNGQSFAGTGAQ). Over residues 825–834 (TPGGPTKPTG) the composition is skewed to low complexity.

The protein belongs to the E2F/DP family. In terms of assembly, homodimer and heterodimer: mainly forms homodimers and, to a lesser extent, heterodimers with E2F8. Dimerization is important for DNA-binding. Interacts with HIF1A.

It is found in the nucleus. Its function is as follows. Atypical E2F transcription factor that participates in various processes such as angiogenesis and polyploidization of specialized cells. Mainly acts as a transcription repressor that binds DNA independently of DP proteins and specifically recognizes the E2 recognition site 5'-TTTC[CG]CGC-3'. Directly represses transcription of classical E2F transcription factors such as E2F1: component of a feedback loop in S phase by repressing the expression of E2F1, thereby preventing p53/TP53-dependent apoptosis. Plays a key role in polyploidization of cells in placenta and liver by regulating the endocycle, probably by repressing genes promoting cytokinesis and antagonizing action of classical E2F proteins (E2F1, E2F2 and/or E2F3). Required for placental development by promoting polyploidization of trophoblast giant cells. Acts as a promoter of sprouting angiogenesis, possibly by acting as a transcription activator: associates with HIF1A, recognizes and binds the VEGFA promoter, which is different from canonical E2 recognition site, and activates expression of the VEGFA gene. This Bos taurus (Bovine) protein is Transcription factor E2F8 (E2F8).